The primary structure comprises 216 residues: UPF0502 protein VCM66_A0698 (216 aa).

The protein belongs to the UPF0502 family.

This chain is UPF0502 protein VCM66_A0698, found in Vibrio cholerae serotype O1 (strain M66-2).